A 257-amino-acid chain; its full sequence is Neurotrophin-3 (257 aa).

The first 18 residues, methionine 1–glycine 18, serve as a signal peptide directing secretion. A propeptide spanning residues asparagine 19–arginine 138 is cleaved from the precursor. The disordered stretch occupies residues serine 61 to alanine 81. The span at glutamate 67–glycine 76 shows a compositional bias: basic and acidic residues. A glycan (N-linked (GlcNAc...) asparagine) is linked at asparagine 131. Intrachain disulfides connect cysteine 152–cysteine 217, cysteine 195–cysteine 246, and cysteine 205–cysteine 248.

It belongs to the NGF-beta family. In terms of tissue distribution, brain and peripheral tissues.

Its subcellular location is the secreted. Its function is as follows. Seems to promote the survival of visceral and proprioceptive sensory neurons. The chain is Neurotrophin-3 (NTF3) from Homo sapiens (Human).